The sequence spans 790 residues: Nuclear cap-binding protein subunit 1 (790 aa).

The tract at residues 1–26 (MSRRRHSYENDGGQPHKRRKTSDANE) is disordered. Residues 3–20 (RRRHSYENDGGQPHKRRK) carry the Nuclear localization signal motif. Ser7 carries the phosphoserine modification. A Phosphothreonine modification is found at Thr21. Ser22 and Ser201 each carry phosphoserine. The MIF4G domain occupies 28–240 (EDHLESLICK…CLWAQIQKLK (213 aa)). Lys204 bears the N6-acetyllysine mark. Residues 643–713 (STIRKMNKHV…SEQKNLFLVI (71 aa)) are a coiled coil. Lys684 is covalently cross-linked (Glycyl lysine isopeptide (Lys-Gly) (interchain with G-Cter in SUMO2)). At Lys698 the chain carries N6-acetyllysine.

Belongs to the NCBP1 family. As to quaternary structure, component of the nuclear cap-binding complex (CBC), a heterodimer composed of NCBP1/CBP80 and NCBP2/CBP20 that interacts with m7GpppG-capped RNA. Found in a U snRNA export complex containing PHAX/RNUXA, NCBP1/CBP80, NCBP2/CBP20, RAN, XPO1 and m7G-capped RNA. Identified in a IGF2BP1-dependent mRNP granule complex containing untranslated mRNAs. Interacts with PHAX/RNUXA, SRRT/ARS2, EIF4G2, IGF2BP1, HNRNPF, HNRNPH1, KIAA0427/CTIF, PARN, DROSHA, UPF1 and ALYREF/THOC4. May interact with EIF4G1; the interaction is however controversial since it is reported by, and, but is not observed by. The large PER complex involved in the repression of transcriptional termination is composed of at least PER2, CDK9, DDX5, DHX9, NCBP1/CBP80 and POLR2A. Component of an alternative nuclear cap-binding complex (CBC) composed of NCBP1/CBP80 and NCBP3. Interacts with METTL3. Interacts with ZFC3H1 in a RNase-insensitive manner. Interacts with MTREX. Interacts with TASOR. Interacts with DHX34; the interaction is RNA-dependent. Interacts with KPNA3. Dephosphorylated at Thr-21 by the PNUTS-PP1 complex during RNA polymerase II transcription pause-release.

The protein resides in the nucleus. Its subcellular location is the cytoplasm. Its function is as follows. Component of the cap-binding complex (CBC), which binds cotranscriptionally to the 5'-cap of pre-mRNAs and is involved in various processes such as pre-mRNA splicing, translation regulation, nonsense-mediated mRNA decay, RNA-mediated gene silencing (RNAi) by microRNAs (miRNAs) and mRNA export. The CBC complex is involved in mRNA export from the nucleus via its interaction with ALYREF/THOC4/ALY, leading to the recruitment of the mRNA export machinery to the 5'-end of mRNA and to mRNA export in a 5' to 3' direction through the nuclear pore. The CBC complex is also involved in mediating U snRNA and intronless mRNAs export from the nucleus. The CBC complex is essential for a pioneer round of mRNA translation, before steady state translation when the CBC complex is replaced by cytoplasmic cap-binding protein eIF4E. The pioneer round of mRNA translation mediated by the CBC complex plays a central role in nonsense-mediated mRNA decay (NMD), NMD only taking place in mRNAs bound to the CBC complex, but not on eIF4E-bound mRNAs. The CBC complex enhances NMD in mRNAs containing at least one exon-junction complex (EJC) via its interaction with UPF1, promoting the interaction between UPF1 and UPF2. The CBC complex is also involved in 'failsafe' NMD, which is independent of the EJC complex, while it does not participate in Staufen-mediated mRNA decay (SMD). During cell proliferation, the CBC complex is also involved in microRNAs (miRNAs) biogenesis via its interaction with SRRT/ARS2 and is required for miRNA-mediated RNA interference. The CBC complex also acts as a negative regulator of PARN, thereby acting as an inhibitor of mRNA deadenylation. In the CBC complex, NCBP1/CBP80 does not bind directly capped RNAs (m7GpppG-capped RNA) but is required to stabilize the movement of the N-terminal loop of NCBP2/CBP20 and lock the CBC into a high affinity cap-binding state with the cap structure. Associates with NCBP3 to form an alternative cap-binding complex (CBC) which plays a key role in mRNA export and is particularly important in cellular stress situations such as virus infections. The conventional CBC with NCBP2 binds both small nuclear RNA (snRNA) and messenger (mRNA) and is involved in their export from the nucleus whereas the alternative CBC with NCBP3 does not bind snRNA and associates only with mRNA thereby playing a role only in mRNA export. NCBP1/CBP80 is required for cell growth and viability. The sequence is that of Nuclear cap-binding protein subunit 1 (Ncbp1) from Rattus norvegicus (Rat).